Consider the following 106-residue polypeptide: Ferredoxin-2 (106 aa).

4Fe-4S ferredoxin-type domains lie at 2–29 and 30–59; these read YVVT…YEGE and NFLV…GKWL. Positions 8 and 16 each coordinate [3Fe-4S] cluster. Cys-20, Cys-39, Cys-42, and Cys-45 together coordinate [4Fe-4S] cluster. Cys-49 serves as a coordination point for [3Fe-4S] cluster. The segment at 80 to 106 is disordered; the sequence is ADADDWKDKPDKTGLLSENPGKGTVCH.

[4Fe-4S] cluster serves as cofactor. Requires [3Fe-4S] cluster as cofactor.

Its function is as follows. Ferredoxins are iron-sulfur proteins that transfer electrons in a wide variety of metabolic reactions. The protein is Ferredoxin-2 of Rhodospirillum rubrum.